The primary structure comprises 221 residues: Thiopurine S-methyltransferase (221 aa).

4 residues coordinate S-adenosyl-L-methionine: Trp12, Leu47, Glu68, and Arg125.

This sequence belongs to the class I-like SAM-binding methyltransferase superfamily. TPMT family.

The protein resides in the cytoplasm. The enzyme catalyses S-adenosyl-L-methionine + a thiopurine = S-adenosyl-L-homocysteine + a thiopurine S-methylether.. This is Thiopurine S-methyltransferase from Legionella pneumophila subsp. pneumophila (strain Philadelphia 1 / ATCC 33152 / DSM 7513).